Here is a 964-residue protein sequence, read N- to C-terminus: Syndetin (964 aa).

Met1 is modified (N-acetylmethionine). The segment at Met1–Ala25 is disordered. At Ser15 the chain carries Phosphoserine. 2 coiled-coil regions span residues Leu81–Leu107 and Tyr216–Ile244. Phosphoserine is present on residues Ser494, Ser498, Ser559, and Ser561. The disordered stretch occupies residues Asp532–Val563. Lys963 is covalently cross-linked (Glycyl lysine isopeptide (Lys-Gly) (interchain with G-Cter in SUMO1); alternate). Residue Lys963 forms a Glycyl lysine isopeptide (Lys-Gly) (interchain with G-Cter in SUMO2); alternate linkage.

Belongs to the syndetin family. Component of the endosome-associated retrograde protein (EARP) complex, composed of VPS51, VPS52, VPS53 and VPS50/Syndetin. The EARP complex interacts with EIPR1. Interacts with VPS51 and VPS53 in an EIPR1-independent manner.

It localises to the recycling endosome. The protein localises to the membrane. Acts as a component of the EARP complex that is involved in endocytic recycling. The EARP complex associates with Rab4-positive endosomes and promotes recycling of internalized transferrin receptor (TFRC) to the plasma membrane. Within the EARP complex, required to tether the complex to recycling endosomes. Not involved in retrograde transport from early and late endosomes to the trans-Golgi network (TGN). The chain is Syndetin from Mus musculus (Mouse).